A 22-amino-acid chain; its full sequence is FYAGLILTLVNTFPYNISPASS.

It localises to the secreted. The protein resides in the cell wall. This chain is 50 kDa cell wall protein, found in Nicotiana tabacum (Common tobacco).